We begin with the raw amino-acid sequence, 238 residues long: Type III secretion protein hrcQa (238 aa).

The segment at 66–238 (DAEALLSLLG…SHEEHRHHEY (173 aa)) is hrcQa-C.

In terms of assembly, interacts with hrcQb.

The protein localises to the cell inner membrane. Component of the type III secretion system, which is required for effector protein delivery, parasitism, and pathogenicity. Probably participates in the formation of a C-ring-like assembly along with hrcQb. The sequence is that of Type III secretion protein hrcQa (hrcQa) from Pseudomonas savastanoi pv. phaseolicola (Pseudomonas syringae pv. phaseolicola).